The sequence spans 160 residues: Large ribosomal subunit protein uL22c (160 aa).

This sequence belongs to the universal ribosomal protein uL22 family. Part of the 50S ribosomal subunit.

The protein resides in the plastid. The protein localises to the chloroplast. This protein binds specifically to 23S rRNA. In terms of biological role, the globular domain of the protein is located near the polypeptide exit tunnel on the outside of the subunit, while an extended beta-hairpin is found that lines the wall of the exit tunnel in the center of the 70S ribosome. The protein is Large ribosomal subunit protein uL22c (rpl22) of Panax ginseng (Korean ginseng).